Here is a 629-residue protein sequence, read N- to C-terminus: Carboxypeptidase Y homolog ARB_06361 (629 aa).

Residues 1–18 (MLITWLLDVLLLAPPVAA) form the signal peptide. N-linked (GlcNAc...) asparagine glycans are attached at residues Asn157 and Asn197. The active site involves Ser235. An intrachain disulfide couples Cys326 to Cys355. 2 N-linked (GlcNAc...) asparagine glycosylation sites follow: Asn405 and Asn418. Residue Asp453 is part of the active site. Residue Cys456 participates in substrate binding. N-linked (GlcNAc...) asparagine glycans are attached at residues Asn463 and Asn554.

Belongs to the peptidase S10 family.

Its subcellular location is the secreted. It catalyses the reaction Release of a C-terminal amino acid with broad specificity.. Functionally, involved in degradation of small peptides. This Arthroderma benhamiae (strain ATCC MYA-4681 / CBS 112371) (Trichophyton mentagrophytes) protein is Carboxypeptidase Y homolog ARB_06361.